Reading from the N-terminus, the 409-residue chain is Phosphatidylglycerol--prolipoprotein diacylglyceryl transferase (409 aa).

4 helical membrane-spanning segments follow: residues 18 to 38 (PVPLRAYALMIIIGVFVAVFV), 48 to 68 (MDPMVASEVAYWAVPFGIVGA), 93 to 113 (IWNGGLGIWGAIAGGAFGAWL), and 119 to 139 (GISLALFGDAAAPGIILAQAI). An a 1,2-diacyl-sn-glycero-3-phospho-(1'-sn-glycerol)-binding site is contributed by R141. The next 2 helical transmembrane spans lie at 177 to 197 (QPTFLYECLWNLVVAGILLVV) and 234 to 254 (ILGLRVNIWTSIVVCLGALLA). The tract at residues 273 to 409 (ALGIARSRPA…AVPPEEPQLP (137 aa)) is disordered. 3 stretches are compositionally biased toward low complexity: residues 297–309 (AAAPDSAGPDSAA), 320–335 (PDLGGPDPADPGSAGS), and 348–375 (TATTATTATTATTATTATTATTATTATT).

It belongs to the Lgt family.

The protein localises to the cell membrane. It carries out the reaction L-cysteinyl-[prolipoprotein] + a 1,2-diacyl-sn-glycero-3-phospho-(1'-sn-glycerol) = an S-1,2-diacyl-sn-glyceryl-L-cysteinyl-[prolipoprotein] + sn-glycerol 1-phosphate + H(+). The protein operates within protein modification; lipoprotein biosynthesis (diacylglyceryl transfer). Catalyzes the transfer of the diacylglyceryl group from phosphatidylglycerol to the sulfhydryl group of the N-terminal cysteine of a prolipoprotein, the first step in the formation of mature lipoproteins. The chain is Phosphatidylglycerol--prolipoprotein diacylglyceryl transferase from Frankia casuarinae (strain DSM 45818 / CECT 9043 / HFP020203 / CcI3).